Here is a 951-residue protein sequence, read N- to C-terminus: Exportin-2 (951 aa).

The 76-residue stretch at 29–104 folds into the Importin N-terminal domain; that stretch reads ATSKIQKFVK…KSLLLNFILS (76 aa).

Belongs to the XPO2/CSE1 family.

The protein resides in the cytoplasm. Its subcellular location is the nucleus. Its function is as follows. Export receptor for importin alpha. Mediates importin-alpha re-export from the nucleus to the cytoplasm after import substrates have been released into the nucleoplasm. This chain is Exportin-2 (xpo2), found in Dictyostelium discoideum (Social amoeba).